The chain runs to 111 residues: MILIWLSIFMLVFIMLTLGMFVNKKVSLDREKSSPFECGFDPLNSSRTPFSIRFFVITLIFLIFDVEIYLLLPMVYLNMSSPTTYLIIFFTFILVAGVFYEWSEGALSWIK.

3 helical membrane-spanning segments follow: residues 2 to 22, 54 to 74, and 82 to 102; these read ILIW…GMFV, FFVI…LLPM, and PTTY…FYEW.

The protein belongs to the complex I subunit 3 family.

It localises to the mitochondrion membrane. It catalyses the reaction a ubiquinone + NADH + 5 H(+)(in) = a ubiquinol + NAD(+) + 4 H(+)(out). Core subunit of the mitochondrial membrane respiratory chain NADH dehydrogenase (Complex I) that is believed to belong to the minimal assembly required for catalysis. Complex I functions in the transfer of electrons from NADH to the respiratory chain. The immediate electron acceptor for the enzyme is believed to be ubiquinone. The chain is NADH-ubiquinone oxidoreductase chain 3 (ND3) from Artemia franciscana (Brine shrimp).